We begin with the raw amino-acid sequence, 319 residues long: Beta-ketoacyl-[acyl-carrier-protein] synthase III (319 aa).

Residues cysteine 115 and histidine 246 contribute to the active site. The tract at residues 247 to 251 (QANLR) is ACP-binding. Asparagine 276 is a catalytic residue.

Belongs to the thiolase-like superfamily. FabH family. Homodimer.

It localises to the cytoplasm. It carries out the reaction malonyl-[ACP] + acetyl-CoA + H(+) = 3-oxobutanoyl-[ACP] + CO2 + CoA. It participates in lipid metabolism; fatty acid biosynthesis. Functionally, catalyzes the condensation reaction of fatty acid synthesis by the addition to an acyl acceptor of two carbons from malonyl-ACP. Catalyzes the first condensation reaction which initiates fatty acid synthesis and may therefore play a role in governing the total rate of fatty acid production. Possesses both acetoacetyl-ACP synthase and acetyl transacylase activities. Its substrate specificity determines the biosynthesis of branched-chain and/or straight-chain of fatty acids. This is Beta-ketoacyl-[acyl-carrier-protein] synthase III from Coxiella burnetii (strain Dugway 5J108-111).